The sequence spans 52 residues: UPF0057 membrane protein At1g57550 (52 aa).

The next 2 membrane-spanning stretches (helical) occupy residues F4–L24 and V30–L50.

This sequence belongs to the UPF0057 (PMP3) family.

The protein localises to the membrane. This chain is UPF0057 membrane protein At1g57550, found in Arabidopsis thaliana (Mouse-ear cress).